Reading from the N-terminus, the 382-residue chain is Proton extrusion protein PxcA (382 aa).

The next 4 membrane-spanning stretches (helical) occupy residues 156–176, 257–277, 305–325, and 340–360; these read TLISLKVLLLLILVPLLVQQV, AVKNVIADLAATVAFVVVCVF, IILFTDIFVGFHSPEGWTVLL, and FILLFIATFPVILATIFKYWI.

This sequence belongs to the CemA family.

Its subcellular location is the cell inner membrane. Its function is as follows. Required for H(+) efflux immediately after light irradiation to form a rapid H(+) concentration gradient across the thylakoid membranes. Together with PxcL, contributes to transient H(+) uptake following dark to light transition. This is Proton extrusion protein PxcA from Synechococcus sp. (strain WH7803).